Consider the following 389-residue polypeptide: tRNA-specific 2-thiouridylase MnmA (389 aa).

Residues 35 to 42 (GMSGGVDS) and Met61 contribute to the ATP site. Residues 121–123 (NPD) form an interaction with target base in tRNA region. Cys126 acts as the Nucleophile in catalysis. A disulfide bridge links Cys126 with Cys223. Gly151 contacts ATP. Residues 173–175 (KDQ) are interaction with tRNA. Residue Cys223 is the Cysteine persulfide intermediate of the active site. The tract at residues 335–336 (RY) is interaction with tRNA.

Belongs to the MnmA/TRMU family.

It localises to the cytoplasm. The enzyme catalyses S-sulfanyl-L-cysteinyl-[protein] + uridine(34) in tRNA + AH2 + ATP = 2-thiouridine(34) in tRNA + L-cysteinyl-[protein] + A + AMP + diphosphate + H(+). Catalyzes the 2-thiolation of uridine at the wobble position (U34) of tRNA, leading to the formation of s(2)U34. This is tRNA-specific 2-thiouridylase MnmA from Mannheimia succiniciproducens (strain KCTC 0769BP / MBEL55E).